We begin with the raw amino-acid sequence, 159 residues long: Phosphopantetheine adenylyltransferase (159 aa).

Thr-9 contributes to the substrate binding site. ATP contacts are provided by residues 9-10 and His-17; that span reads TF. Substrate contacts are provided by Lys-41, Leu-73, and Arg-87. Residues 88-90, Glu-98, and 123-129 contribute to the ATP site; these read GLR and YSFISST.

The protein belongs to the bacterial CoaD family. As to quaternary structure, homohexamer. It depends on Mg(2+) as a cofactor.

It localises to the cytoplasm. It carries out the reaction (R)-4'-phosphopantetheine + ATP + H(+) = 3'-dephospho-CoA + diphosphate. It functions in the pathway cofactor biosynthesis; coenzyme A biosynthesis; CoA from (R)-pantothenate: step 4/5. In terms of biological role, reversibly transfers an adenylyl group from ATP to 4'-phosphopantetheine, yielding dephospho-CoA (dPCoA) and pyrophosphate. This Pseudomonas syringae pv. tomato (strain ATCC BAA-871 / DC3000) protein is Phosphopantetheine adenylyltransferase.